The chain runs to 148 residues: Large ribosomal subunit protein bL9 (148 aa).

This sequence belongs to the bacterial ribosomal protein bL9 family.

Its function is as follows. Binds to the 23S rRNA. The protein is Large ribosomal subunit protein bL9 of Staphylococcus haemolyticus (strain JCSC1435).